Consider the following 522-residue polypeptide: Maturase K (522 aa).

Belongs to the intron maturase 2 family. MatK subfamily.

It localises to the plastid. The protein resides in the chloroplast. Its function is as follows. Usually encoded in the trnK tRNA gene intron. Probably assists in splicing its own and other chloroplast group II introns. The sequence is that of Maturase K from Aristea glauca.